We begin with the raw amino-acid sequence, 152 residues long: MEEDEVAESWEEAADSGEIERRLEKKLKISQRENNNTKSPPRAPVVIQDDSLPSGPPPQIRILKRPTSNGLASSPHACSRPAAPVKSLAQREAEYAEARKRILGSASPEEEQEKPVAERPARINQVEEIRQQNNVIRQPLGPDGSQGFRQGR.

The interval 28–152 is disordered; that stretch reads KISQRENNNT…DGSQGFRQGR (125 aa). Residues 42 to 107 form the SUZ domain; it reads RAPVVIQDDS…ARKRILGSAS (66 aa). 2 stretches are compositionally biased toward basic and acidic residues: residues 89–100 and 113–130; these read AQREAEYAEARK and EKPV…EEIR. The 42-residue stretch at 111–152 folds into the SUZ-C domain; the sequence is EQEKPVAERPARINQVEEIRQQNNVIRQPLGPDGSQGFRQGR.

This sequence belongs to the SZRD1 family.

The polypeptide is SUZ RNA-binding domain-containing (szrd1) (Xenopus laevis (African clawed frog)).